Here is a 414-residue protein sequence, read N- to C-terminus: Succinylornithine transaminase (414 aa).

Residue Lys260 is modified to N6-(pyridoxal phosphate)lysine.

Belongs to the class-III pyridoxal-phosphate-dependent aminotransferase family. AstC subfamily. Pyridoxal 5'-phosphate serves as cofactor.

The enzyme catalyses N(2)-succinyl-L-ornithine + 2-oxoglutarate = N-succinyl-L-glutamate 5-semialdehyde + L-glutamate. It participates in amino-acid degradation; L-arginine degradation via AST pathway; L-glutamate and succinate from L-arginine: step 3/5. Catalyzes the transamination of N(2)-succinylornithine and alpha-ketoglutarate into N(2)-succinylglutamate semialdehyde and glutamate. Can also act as an acetylornithine aminotransferase. The sequence is that of Succinylornithine transaminase from Yersinia pestis bv. Antiqua (strain Antiqua).